The following is a 178-amino-acid chain: Probable coatomer subunit zeta-B (178 aa).

This sequence belongs to the adaptor complexes small subunit family. Oligomeric complex that consists of at least the alpha, beta, beta', gamma, delta, epsilon and zeta subunits.

It is found in the cytoplasm. Its subcellular location is the golgi apparatus membrane. It localises to the cytoplasmic vesicle. The protein resides in the COPI-coated vesicle membrane. In terms of biological role, the coatomer is a cytosolic protein complex that binds to dilysine motifs and reversibly associates with Golgi non-clathrin-coated vesicles, which further mediate biosynthetic protein transport from the ER, via the Golgi up to the trans Golgi network. Coatomer complex is required for budding from Golgi membranes, and is essential for the retrograde Golgi-to-ER transport of dilysine-tagged proteins. The zeta subunit may be involved in regulating the coat assembly and, hence, the rate of biosynthetic protein transport due to its association-dissociation properties with the coatomer complex. The sequence is that of Probable coatomer subunit zeta-B (copZb) from Dictyostelium discoideum (Social amoeba).